The following is a 401-amino-acid chain: 8-amino-7-oxononanoate synthase (401 aa).

Position 24 (arginine 24) interacts with substrate. 111 to 112 (GF) serves as a coordination point for pyridoxal 5'-phosphate. Histidine 137 lines the substrate pocket. Positions 183, 211, and 240 each coordinate pyridoxal 5'-phosphate. Position 243 is an N6-(pyridoxal phosphate)lysine (lysine 243). Residue threonine 357 participates in substrate binding.

It belongs to the class-II pyridoxal-phosphate-dependent aminotransferase family. BioF subfamily. Homodimer. The cofactor is pyridoxal 5'-phosphate.

It carries out the reaction 6-carboxyhexanoyl-[ACP] + L-alanine + H(+) = (8S)-8-amino-7-oxononanoate + holo-[ACP] + CO2. It participates in cofactor biosynthesis; biotin biosynthesis. Its function is as follows. Catalyzes the decarboxylative condensation of pimeloyl-[acyl-carrier protein] and L-alanine to produce 8-amino-7-oxononanoate (AON), [acyl-carrier protein], and carbon dioxide. The protein is 8-amino-7-oxononanoate synthase of Xylella fastidiosa (strain M23).